Consider the following 511-residue polypeptide: Probable cytosol aminopeptidase (511 aa).

Mn(2+) is bound by residues Lys-255 and Asp-260. The active site involves Lys-267. Asp-278, Asp-337, and Glu-339 together coordinate Mn(2+). Arg-341 is a catalytic residue. The tract at residues Gly-485–Gln-511 is disordered.

The protein belongs to the peptidase M17 family. Mn(2+) serves as cofactor.

The protein localises to the cytoplasm. The catalysed reaction is Release of an N-terminal amino acid, Xaa-|-Yaa-, in which Xaa is preferably Leu, but may be other amino acids including Pro although not Arg or Lys, and Yaa may be Pro. Amino acid amides and methyl esters are also readily hydrolyzed, but rates on arylamides are exceedingly low.. It catalyses the reaction Release of an N-terminal amino acid, preferentially leucine, but not glutamic or aspartic acids.. Its function is as follows. Presumably involved in the processing and regular turnover of intracellular proteins. Catalyzes the removal of unsubstituted N-terminal amino acids from various peptides. This Variovorax paradoxus (strain S110) protein is Probable cytosol aminopeptidase.